The chain runs to 93 residues: Red pigment-concentrating hormone (93 aa).

Residues 1–21 (MVRAVVATLLVVLVVASCVSA) form the signal peptide. Q22 is modified (pyrrolidone carboxylic acid). W29 carries the post-translational modification Tryptophan amide. Residues 33-93 (AAAGGEGTGM…VQCQDEEYLG (61 aa)) constitute a propeptide that is removed on maturation. Residues 34–56 (AAGGEGTGMHPPAGAVVPPPSSL) form a disordered region.

Belongs to the AKH/HRTH/RPCH family. In terms of tissue distribution, strongly expressed in the eyestalk and weakly in brain. Not expressed in other tissues tested.

The protein resides in the secreted. This hormone adapts the animal to light backgrounds by stimulating concentration of the pigment of its red body-chromatophores. The chain is Red pigment-concentrating hormone from Penaeus monodon (Giant tiger prawn).